A 114-amino-acid polypeptide reads, in one-letter code: Fumarate reductase subunit D (114 aa).

Transmembrane regions (helical) follow at residues 24-44 (VSAI…PFGL), 50-70 (LITF…TIFP), and 92-112 (GGFI…FAVI).

The protein belongs to the FrdD family. In terms of assembly, part of an enzyme complex containing four subunits: a flavoprotein (FrdA), an iron-sulfur protein (FrdB), and two hydrophobic anchor proteins (FrdC and FrdD).

The protein localises to the cell inner membrane. In terms of biological role, anchors the catalytic components of the fumarate reductase complex to the cell membrane, binds quinones. This Haemophilus influenzae (strain 86-028NP) protein is Fumarate reductase subunit D.